The following is a 137-amino-acid chain: UPF0148 protein MJ0890 (137 aa).

It belongs to the UPF0148 family.

This Methanocaldococcus jannaschii (strain ATCC 43067 / DSM 2661 / JAL-1 / JCM 10045 / NBRC 100440) (Methanococcus jannaschii) protein is UPF0148 protein MJ0890.